Reading from the N-terminus, the 153-residue chain is Antibacterial peptide PMAP-23 (153 aa).

The first 29 residues, 1–29 (METQRASLCLGRWSLWLLLLGLVVPSASA), serve as a signal peptide directing secretion. Gln-30 carries the post-translational modification Pyrrolidone carboxylic acid. The propeptide occupies 30–130 (QALSYREAVL…DITCNQLQSV (101 aa)). Residues 61–80 (DQPPKADEDPGTPKPVSFTV) form a disordered region. Intrachain disulfides connect Cys-85/Cys-96 and Cys-107/Cys-124.

This sequence belongs to the cathelicidin family.

The protein localises to the secreted. In terms of biological role, exerts antimicrobial activity against both Gram-positive and negative bacteria at concentrations of 2-16 micro molar. Its activity appears to be mediated by its ability to damage bacterial membranes. This is Antibacterial peptide PMAP-23 (PMAP23) from Sus scrofa (Pig).